Reading from the N-terminus, the 503-residue chain is Probable cytosol aminopeptidase (503 aa).

Residues lysine 270 and aspartate 275 each contribute to the Mn(2+) site. Lysine 282 is an active-site residue. Mn(2+) is bound by residues aspartate 293, aspartate 352, and glutamate 354. Arginine 356 is a catalytic residue.

The protein belongs to the peptidase M17 family. Mn(2+) is required as a cofactor.

The protein localises to the cytoplasm. It catalyses the reaction Release of an N-terminal amino acid, Xaa-|-Yaa-, in which Xaa is preferably Leu, but may be other amino acids including Pro although not Arg or Lys, and Yaa may be Pro. Amino acid amides and methyl esters are also readily hydrolyzed, but rates on arylamides are exceedingly low.. The enzyme catalyses Release of an N-terminal amino acid, preferentially leucine, but not glutamic or aspartic acids.. In terms of biological role, presumably involved in the processing and regular turnover of intracellular proteins. Catalyzes the removal of unsubstituted N-terminal amino acids from various peptides. This Salmonella typhi protein is Probable cytosol aminopeptidase.